Consider the following 284-residue polypeptide: L-ribulose-5-phosphate 3-epimerase UlaE (284 aa).

This sequence belongs to the L-ribulose-5-phosphate 3-epimerase family.

The catalysed reaction is L-ribulose 5-phosphate = L-xylulose 5-phosphate. Its pathway is cofactor degradation; L-ascorbate degradation; D-xylulose 5-phosphate from L-ascorbate: step 3/4. In terms of biological role, catalyzes the isomerization of L-xylulose-5-phosphate to L-ribulose-5-phosphate. Is involved in the anaerobic L-ascorbate utilization. This chain is L-ribulose-5-phosphate 3-epimerase UlaE, found in Escherichia coli O45:K1 (strain S88 / ExPEC).